The sequence spans 503 residues: Maturase K (503 aa).

The protein belongs to the intron maturase 2 family. MatK subfamily.

It is found in the plastid. The protein localises to the chloroplast. Functionally, usually encoded in the trnK tRNA gene intron. Probably assists in splicing its own and other chloroplast group II introns. The protein is Maturase K of Rosa californica (California wild rose).